Reading from the N-terminus, the 147-residue chain is Large ribosomal subunit protein uL16c (147 aa).

Positions 1-17 (MLSPKRTRFRKQHRGRM) are enriched in basic residues. The disordered stretch occupies residues 1-20 (MLSPKRTRFRKQHRGRMKGI).

The protein belongs to the universal ribosomal protein uL16 family. As to quaternary structure, part of the 50S ribosomal subunit.

The protein resides in the plastid. The protein localises to the chloroplast. The protein is Large ribosomal subunit protein uL16c of Ipomoea purpurea (Common morning glory).